The chain runs to 453 residues: Frizzled/smoothened-like sans CRD protein G (453 aa).

The first 24 residues, 1 to 24, serve as a signal peptide directing secretion; it reads MIYILKNFIIILFFLLIILKRIES. Residues 25 to 89 lie on the Extracellular side of the membrane; it reads QSLPSLPSPT…PFFTLDEWNK (65 aa). N-linked (GlcNAc...) asparagine glycosylation is found at asparagine 49 and asparagine 67. Residues 90 to 110 traverse the membrane as a helical segment; the sequence is FLYMSLVMGTISFLCGLFLLI. The Cytoplasmic portion of the chain corresponds to 111-124; it reads TYSPIVNKTHNRHT. Residues 125 to 145 traverse the membrane as a helical segment; that stretch reads IGVMCMSFGVCLAMCSDMWNF. The Extracellular portion of the chain corresponds to 146-170; sequence GSNFTDQKSICPSPGQYLTTSNSRC. Asparagine 148 carries an N-linked (GlcNAc...) asparagine glycan. The helical transmembrane segment at 171–191 threads the bilayer; the sequence is LGSGIVLQFGGVFGFLNWTLL. At 192–209 the chain is on the cytoplasmic side; that stretch reads SFDLFMNIKGIITKNYDK. Residues 210–230 form a helical membrane-spanning segment; it reads YYFVATFIIAIIFTFVPIVND. The Extracellular portion of the chain corresponds to 231-250; that stretch reads QYSMSYIGLGCWLGSAVYQL. The chain crosses the membrane as a helical span at residues 251 to 271; that stretch reads IFFWILLSICLIVSSVFIILI. Residues 272 to 296 lie on the Cytoplasmic side of the membrane; that stretch reads LKEIYIIIKQSKQKTSLKGNIRPLL. A helical transmembrane segment spans residues 297–317; it reads CITVTSFAFFYMFFYYISIVI. Residues 318 to 352 are Extracellular-facing; it reads EGDYYERILNEYTDCLMDPTKDVSECKFPRMSVAN. The chain crosses the membrane as a helical span at residues 353-373; that stretch reads EFVFLLCLRLLGIGAFIFYGI. The Cytoplasmic segment spans residues 374-453; sequence NKEVKKIWLN…DDNFKPIIIK (80 aa).

The protein belongs to the G-protein coupled receptor Fz/Smo family.

It is found in the membrane. This is Frizzled/smoothened-like sans CRD protein G (fscG) from Dictyostelium discoideum (Social amoeba).